A 161-amino-acid chain; its full sequence is Putative pre-16S rRNA nuclease (161 aa).

Positions 141–161 are disordered; sequence AAGSPPGALVPRNRVDPDRHA.

It belongs to the YqgF nuclease family.

The protein resides in the cytoplasm. Could be a nuclease involved in processing of the 5'-end of pre-16S rRNA. This is Putative pre-16S rRNA nuclease from Clavibacter michiganensis subsp. michiganensis (strain NCPPB 382).